The following is a 383-amino-acid chain: tRNA-specific 2-thiouridylase MnmA (383 aa).

ATP is bound by residues 11–18 (GLSGGVDS) and M37. The tract at residues 97–99 (NPD) is interaction with target base in tRNA. Residue C102 is the Nucleophile of the active site. An intrachain disulfide couples C102 to C200. ATP is bound at residue G127. The segment at 150-152 (KDQ) is interaction with tRNA. The Cysteine persulfide intermediate role is filled by C200. Residues 312–313 (RY) form an interaction with tRNA region. Residues 361 to 383 (IDTAHPADRSAPPALQTQSTEVV) form a disordered region.

This sequence belongs to the MnmA/TRMU family.

It is found in the cytoplasm. The enzyme catalyses S-sulfanyl-L-cysteinyl-[protein] + uridine(34) in tRNA + AH2 + ATP = 2-thiouridine(34) in tRNA + L-cysteinyl-[protein] + A + AMP + diphosphate + H(+). Its function is as follows. Catalyzes the 2-thiolation of uridine at the wobble position (U34) of tRNA, leading to the formation of s(2)U34. This is tRNA-specific 2-thiouridylase MnmA from Halorhodospira halophila (strain DSM 244 / SL1) (Ectothiorhodospira halophila (strain DSM 244 / SL1)).